The primary structure comprises 317 residues: Melanocyte-stimulating hormone receptor (317 aa).

The segment covering 1–20 (MPVQGSQRSLLGAVNSTPTA) has biased composition (polar residues). The disordered stretch occupies residues 1 to 23 (MPVQGSQRSLLGAVNSTPTATPH). Residues 1–37 (MPVQGSQRSLLGAVNSTPTATPHLRPAANQTGPQCLE) lie on the Extracellular side of the membrane. An N-linked (GlcNAc...) asparagine glycan is attached at N29. The chain crosses the membrane as a helical span at residues 38-63 (VSIPDGLFLCLGLVSLVENTLVVAAI). Over 64–72 (AKNRNLHSP) the chain is Cytoplasmic. Residues 73-93 (MYCFICCLALSDLLVSVSSVL) traverse the membrane as a helical segment. At 94-118 (ETAVLLLLGAGALAAQATVVQQLGN) the chain is on the extracellular side. A helical transmembrane segment spans residues 119-140 (VIDVLLCSSMVSSLFFLGAIAM). The Cytoplasmic portion of the chain corresponds to 141–163 (DRYISIFYALRYHSIVTLARARR). A helical membrane pass occupies residues 164–183 (AIAAIWAASILSSTLFIAYC). Residues 184–191 (DRTAALLC) lie on the Extracellular side of the membrane. Residues 192-211 (LVVFFLAMLVLMAVLYVHML) traverse the membrane as a helical segment. Topologically, residues 212–240 (TQARQHAQGIARLHKRQRPVQQGWGLKGA) are cytoplasmic. The chain crosses the membrane as a helical span at residues 241 to 266 (ATLTILLGVFFLCWGPFFLHLTLIAV). The Extracellular portion of the chain corresponds to 267-279 (CPQHPTCSCIFKN). Residues 280–300 (FRLFLALIVCNAIVDPLIYAF) form a helical membrane-spanning segment. At 301–317 (RSQELRKTLKEVLLFFW) the chain is on the cytoplasmic side.

The protein belongs to the G-protein coupled receptor 1 family. As to quaternary structure, interacts with MGRN1, but does not undergo MGRN1-mediated ubiquitination; this interaction competes with GNAS-binding and thus inhibits agonist-induced cAMP production. Interacts with OPN3; the interaction results in a decrease in MC1R-mediated cAMP signaling and ultimately a decrease in melanin production in melanocytes.

Its subcellular location is the cell membrane. Its function is as follows. Receptor for MSH (alpha, beta and gamma) and ACTH. The activity of this receptor is mediated by G proteins which activate adenylate cyclase. Mediates melanogenesis, the production of eumelanin (black/brown) and phaeomelanin (red/yellow), via regulation of cAMP signaling in melanocytes. This Lemur catta (Ring-tailed lemur) protein is Melanocyte-stimulating hormone receptor (MC1R).